The following is a 660-amino-acid chain: Bifunctional polymyxin resistance protein ArnA (660 aa).

A formyltransferase ArnAFT region spans residues 1–304; the sequence is MKTVVFAYHD…TLGLVQGSRL (304 aa). 86–88 lines the (6R)-10-formyltetrahydrofolate pocket; sequence HLI. Catalysis depends on H104, which acts as the Proton donor; for formyltransferase activity. Residues R114 and 136-140 each bind (6R)-10-formyltetrahydrofolate; that span reads VKRAD. The interval 314–660 is dehydrogenase ArnADH; it reads RRTRVLILGV…RTVDLTDKPS (347 aa). NAD(+) is bound by residues D347 and 368–369; that span reads DI. UDP-alpha-D-glucuronate is bound by residues A393, Y398, and 432–433; that span reads TS. The Proton acceptor; for decarboxylase activity role is filled by E434. UDP-alpha-D-glucuronate contacts are provided by residues R460, N492, 526-535, and Y613; that span reads KLIDGGKQKR. Residue R619 is the Proton donor; for decarboxylase activity of the active site.

The protein in the N-terminal section; belongs to the Fmt family. UDP-L-Ara4N formyltransferase subfamily. This sequence in the C-terminal section; belongs to the NAD(P)-dependent epimerase/dehydratase family. UDP-glucuronic acid decarboxylase subfamily. Homohexamer, formed by a dimer of trimers.

The enzyme catalyses UDP-alpha-D-glucuronate + NAD(+) = UDP-beta-L-threo-pentopyranos-4-ulose + CO2 + NADH. It carries out the reaction UDP-4-amino-4-deoxy-beta-L-arabinose + (6R)-10-formyltetrahydrofolate = UDP-4-deoxy-4-formamido-beta-L-arabinose + (6S)-5,6,7,8-tetrahydrofolate + H(+). It functions in the pathway nucleotide-sugar biosynthesis; UDP-4-deoxy-4-formamido-beta-L-arabinose biosynthesis; UDP-4-deoxy-4-formamido-beta-L-arabinose from UDP-alpha-D-glucuronate: step 1/3. Its pathway is nucleotide-sugar biosynthesis; UDP-4-deoxy-4-formamido-beta-L-arabinose biosynthesis; UDP-4-deoxy-4-formamido-beta-L-arabinose from UDP-alpha-D-glucuronate: step 3/3. It participates in bacterial outer membrane biogenesis; lipopolysaccharide biosynthesis. In terms of biological role, bifunctional enzyme that catalyzes the oxidative decarboxylation of UDP-glucuronic acid (UDP-GlcUA) to UDP-4-keto-arabinose (UDP-Ara4O) and the addition of a formyl group to UDP-4-amino-4-deoxy-L-arabinose (UDP-L-Ara4N) to form UDP-L-4-formamido-arabinose (UDP-L-Ara4FN). The modified arabinose is attached to lipid A and is required for resistance to polymyxin and cationic antimicrobial peptides. The chain is Bifunctional polymyxin resistance protein ArnA from Escherichia coli O157:H7.